We begin with the raw amino-acid sequence, 130 residues long: Methylglyoxal synthase (130 aa).

One can recognise an MGS-like domain in the interval 1–130 (MSTPRIALIA…DLARRLPVKA (130 aa)). Residues His-11, Lys-15, 37 to 40 (TGTT), and 57 to 58 (SG) each bind substrate. Asp-63 (proton donor/acceptor) is an active-site residue. His-90 is a binding site for substrate.

Belongs to the methylglyoxal synthase family.

It catalyses the reaction dihydroxyacetone phosphate = methylglyoxal + phosphate. Catalyzes the formation of methylglyoxal from dihydroxyacetone phosphate. The chain is Methylglyoxal synthase from Burkholderia thailandensis (strain ATCC 700388 / DSM 13276 / CCUG 48851 / CIP 106301 / E264).